The sequence spans 1276 residues: Histone-lysine N-methyltransferase PRDM16 (1276 aa).

Over residues M1–L10 the composition is skewed to basic residues. The disordered stretch occupies residues M1–Y68. Positions A82–K211 constitute an SET domain. The C2H2-type 1; atypical zinc-finger motif lies at F230 to C253. 5 C2H2-type zinc fingers span residues H281–H303, Y309–H331, F337–H360, H366–H388, and F394–H416. Residues I423–C445 form a C2H2-type 7; atypical zinc finger. Disordered regions lie at residues S533–G657 and P772–D804. The segment covering A561–T570 has biased composition (polar residues). A compositionally biased stretch (basic and acidic residues) spans P575–D597. Residues T609 to D624 show a composition bias toward low complexity. The span at D632 to S642 shows a compositional bias: basic and acidic residues. The segment at D679–S1038 is interaction with CTBP1, CTBP2 and ZNF516. The mediates interaction with SKI and regulation of TGF-beta signaling stretch occupies residues P739–L1276. 3 consecutive C2H2-type zinc fingers follow at residues Y951–H973, Y979–H1002, and F1008–H1032. Disordered stretches follow at residues E1033–L1065 and A1105–A1163. Residues H1047–E1058 show a composition bias toward polar residues. The segment covering E1116 to S1133 has biased composition (acidic residues).

This sequence belongs to the PRDM16 family. As to quaternary structure, interacts with CEBPA, CEBPB and CEBPD; the interaction is direct. Interacts with PPARG and PPARA; controls brown adipocytes differentiation. Interacts with CTBP1 and CTBP2; represses the expression of WAT-specific genes. Interacts with PPARGC1A and PPARGC1B; interaction with PPARGC1A or PPARGC1B activates the transcription of BAT-specific gene. Interacts with HDAC1, SKI, SMAD2 and SMAD3; the interaction with SKI promotes the recruitment of SMAD3-HDAC1 complex on the promoter of TGF-beta target genes. Interacts with ZNF516; the interaction is direct and may play a role in the transcription of brown adipose tissue-specific gene. As to expression, expressed in uterus and kidney. Expressed in both cardiomyocytes and interstitial cells.

Its subcellular location is the nucleus. It is found in the cytoplasm. The enzyme catalyses L-lysyl(9)-[histone H3] + S-adenosyl-L-methionine = N(6)-methyl-L-lysyl(9)-[histone H3] + S-adenosyl-L-homocysteine + H(+). Functionally, binds DNA and functions as a transcriptional regulator. Displays histone methyltransferase activity and monomethylates 'Lys-9' of histone H3 (H3K9me1) in vitro. Probably catalyzes the monomethylation of free histone H3 in the cytoplasm which is then transported to the nucleus and incorporated into nucleosomes where SUV39H methyltransferases use it as a substrate to catalyze histone H3 'Lys-9' trimethylation. Likely to be one of the primary histone methyltransferases along with MECOM/PRDM3 that direct cytoplasmic H3K9me1 methylation. Functions in the differentiation of brown adipose tissue (BAT) which is specialized in dissipating chemical energy in the form of heat in response to cold or excess feeding while white adipose tissue (WAT) is specialized in the storage of excess energy and the control of systemic metabolism. Together with CEBPB, regulates the differentiation of myoblastic precursors into brown adipose cells. Functions as a repressor of TGF-beta signaling. Binds DNA and functions as a transcriptional regulator. Functions as a repressor of TGF-beta signaling. May regulate granulocyte differentiation. The polypeptide is Histone-lysine N-methyltransferase PRDM16 (Homo sapiens (Human)).